A 140-amino-acid chain; its full sequence is Large ribosomal subunit protein bL17 (140 aa).

The tract at residues 120-140 is disordered; it reads EDAKGQDSGPVMVDEDDFAEA.

It belongs to the bacterial ribosomal protein bL17 family. In terms of assembly, part of the 50S ribosomal subunit. Contacts protein L32.

This is Large ribosomal subunit protein bL17 from Erythrobacter litoralis (strain HTCC2594).